We begin with the raw amino-acid sequence, 31 residues long: GLPTCGETCFGGTCNTPGCTCDSSWPICTHN.

Positions 1-31 (GLPTCGETCFGGTCNTPGCTCDSSWPICTHN) form a cross-link, cyclopeptide (Gly-Asn). 3 disulfide bridges follow: C5–C19, C9–C21, and C14–C28.

Post-translationally, this is a cyclic peptide. Expressed in leaves but not in petals, petioles, roots and runners (at protein level).

In terms of biological role, probably participates in a plant defense mechanism. The polypeptide is Cycloviolacin-O23 (Viola odorata (Sweet violet)).